The following is a 261-amino-acid chain: Cathepsin G (261 aa).

Residues 1 to 18 form the signal peptide; the sequence is MQPLLLLLTFILLQGDEA. The propeptide at 19–20 is activation peptide; it reads GK. Positions 21 to 25 are important for antimicrobial activity; sequence IIGGR. The 223-residue stretch at 21 to 243 folds into the Peptidase S1 domain; that stretch reads IIGGREARPH…FMPWIKRTMR (223 aa). The cysteines at positions 49 and 65 are disulfide-linked. His-64 acts as the Charge relay system in catalysis. Residue Asn-71 is glycosylated (N-linked (GlcNAc...) asparagine). The interval 97–111 is important for antimicrobial activity; the sequence is HPDYNPQNIRNDIML. Residue Asp-108 is the Charge relay system of the active site. 2 disulfide bridges follow: Cys-142–Cys-207 and Cys-172–Cys-186. Catalysis depends on Ser-201, which acts as the Charge relay system.

This sequence belongs to the peptidase S1 family. In terms of tissue distribution, in adult, detected only in bone marrow where expression is restricted to a small population of early myeloid cells.

Its subcellular location is the cell membrane. The protein localises to the cytoplasmic granule. It is found in the secreted. The protein resides in the cytoplasm. It localises to the cytosol. Its subcellular location is the lysosome. The protein localises to the nucleus. The enzyme catalyses Specificity similar to chymotrypsin C.. Its activity is regulated as follows. Inhibited by chymostatin, phenylmethanesulfonyl fluoride and diisopropyl fluorophosphate. Its function is as follows. Serine protease with trypsin- and chymotrypsin-like specificity. Also displays antibacterial activity against Gram-negative and Gram-positive bacteria independent of its protease activity. Prefers Phe and Tyr residues in the P1 position of substrates but also cleaves efficiently after Trp and Leu. Shows a preference for negatively charged amino acids in the P2' position and for aliphatic amino acids both upstream and downstream of the cleavage site. Required for recruitment and activation of platelets which is mediated by the F2RL3/PAR4 platelet receptor. Binds reversibly to and stimulates B cells and CD4(+) and CD8(+) T cells. Also binds reversibly to natural killer (NK) cells and enhances NK cell cytotoxicity through its protease activity. Cleaves complement C3. Cleaves vimentin. Cleaves thrombin receptor F2R/PAR1. Cleaves the synovial mucin-type protein PRG4/lubricin. Cleaves and activates IL36G which promotes expression of chemokines CXCL1 and CXLC8 in keratinocytes. Cleaves IL33 into mature forms which have greater activity than the unprocessed form. Cleaves coagulation factor F8 to produce a partially activated form. Also cleaves and activates coagulation factor F10. Cleaves leukocyte cell surface protein SPN/CD43 to release its extracellular domain and trigger its intramembrane proteolysis by gamma-secretase, releasing the CD43 cytoplasmic tail chain (CD43-ct) which translocates to the nucleus. During apoptosis, cleaves SMARCA2/BRM to produce a 160 kDa cleavage product which localizes to the cytosol. Cleaves MBP in B cell lysosomes at '221-Phe-|-Lys-222', degrading the major immunogenic MBP epitope and preventing the activation of MBP-specific autoreactive T cells. Cleaves annexin ANXA1 and antimicrobial peptide CAMP to produce peptides which act on neutrophil N-formyl peptide receptors to enhance the release of CXCL2. Acts as a ligand for the N-formyl peptide receptor FPR1, enhancing phagocyte chemotaxis. Has antibacterial activity against the Gram-negative bacteria N.gonorrhoeae and P.aeruginosa. Likely to act against N.gonorrhoeae by interacting with N.gonorrhoeae penA/PBP2. Exhibits potent antimicrobial activity against the Gram-positive bacterium L.monocytogenes. Has antibacterial activity against the Gram-positive bacterium S.aureus and degrades S.aureus biofilms, allowing polymorphonuclear leukocytes to penetrate the biofilm and phagocytose bacteria. Has antibacterial activity against M.tuberculosis. Induces platelet aggregation which is strongly potentiated in the presence of ELANE. The chain is Cathepsin G (Ctsg) from Mus musculus (Mouse).